Reading from the N-terminus, the 116-residue chain is MGDNTTVAPGTNQTLVEEDLGAQITHTLMVQIMSKLNEMLTEYQPQIIGIGATVLAIFVIMFISLLIILGCNCIRPYNFKNLKRYITGKASKSVEYQPLKMSAVNMGMDEDDEFLA.

Residues Met-1–Gln-46 lie on the Extracellular side of the membrane. N-linked (GlcNAc...) asparagine; by host glycosylation is found at Asn-4 and Asn-12. Residues Ile-47–Ile-67 form a helical membrane-spanning segment. The Cytoplasmic segment spans residues Ile-68–Ala-116.

It localises to the host membrane. This is an uncharacterized protein from Magallana gigas (Pacific oyster).